A 255-amino-acid polypeptide reads, in one-letter code: Wtf element wtf15 (255 aa).

Residues 19–78 are disordered; that stretch reads KAGHEIDLEGSPPSEHNSEEKSTLPSNSDILTSANPVSQASETPDHSIESNTGSTQSPTS. 2 stretches are compositionally biased toward polar residues: residues 41-60 and 67-78; these read TLPS…QASE and ESNTGSTQSPTS. 4 consecutive transmembrane segments (helical) span residues 85 to 105, 112 to 132, 162 to 182, and 187 to 208; these read FSFC…CVLP, FLIA…SGSI, FLKT…LVLL, and WGWK…SFCL.

Belongs to the WTF family.

It is found in the spore membrane. Its function is as follows. May act in meiotic drive. The sequence is that of Wtf element wtf15 from Schizosaccharomyces pombe (strain 972 / ATCC 24843) (Fission yeast).